Here is a 643-residue protein sequence, read N- to C-terminus: Threonine--tRNA ligase (643 aa).

The TGS domain maps to 3–64 (DVVKITFPDG…EEDGAISIIT (62 aa)). The tract at residues 245–542 (DHRKLGKELD…LIEEYKGAFP (298 aa)) is catalytic. 3 residues coordinate Zn(2+): Cys338, His389, and His519.

Belongs to the class-II aminoacyl-tRNA synthetase family. In terms of assembly, homodimer. Zn(2+) serves as cofactor.

It localises to the cytoplasm. It catalyses the reaction tRNA(Thr) + L-threonine + ATP = L-threonyl-tRNA(Thr) + AMP + diphosphate + H(+). Its function is as follows. Catalyzes the attachment of threonine to tRNA(Thr) in a two-step reaction: L-threonine is first activated by ATP to form Thr-AMP and then transferred to the acceptor end of tRNA(Thr). Also edits incorrectly charged L-seryl-tRNA(Thr). This chain is Threonine--tRNA ligase, found in Anoxybacillus flavithermus (strain DSM 21510 / WK1).